Consider the following 260-residue polypeptide: Isopentenyl phosphate kinase (260 aa).

6-10 contributes to the ATP binding site; that stretch reads KLGGS. Position 55 (glycine 55) interacts with substrate. An ATP-binding site is contributed by glycine 56. Positions 60 and 159 each coordinate substrate. 3 residues coordinate ATP: aspartate 180, glycine 217, and lysine 221.

This sequence belongs to the isopentenyl phosphate kinase family. Homodimer.

It carries out the reaction isopentenyl phosphate + ATP = isopentenyl diphosphate + ADP. Catalyzes the formation of isopentenyl diphosphate (IPP), the building block of all isoprenoids. Has no activity with farnesyl phosphate. The sequence is that of Isopentenyl phosphate kinase from Methanocaldococcus jannaschii (strain ATCC 43067 / DSM 2661 / JAL-1 / JCM 10045 / NBRC 100440) (Methanococcus jannaschii).